The following is a 486-amino-acid chain: Malonate-semialdehyde dehydrogenase 2 (486 aa).

NAD(+) is bound by residues F154, K178, E181, R182, and S231. C286 serves as the catalytic Nucleophile. E386 is an NAD(+) binding site.

Belongs to the aldehyde dehydrogenase family. IolA subfamily. In terms of assembly, homotetramer.

It catalyses the reaction 3-oxopropanoate + NAD(+) + CoA + H2O = hydrogencarbonate + acetyl-CoA + NADH + H(+). The enzyme catalyses 2-methyl-3-oxopropanoate + NAD(+) + CoA + H2O = propanoyl-CoA + hydrogencarbonate + NADH + H(+). It participates in polyol metabolism; myo-inositol degradation into acetyl-CoA; acetyl-CoA from myo-inositol: step 7/7. In terms of biological role, catalyzes the oxidation of malonate semialdehyde (MSA) and methylmalonate semialdehyde (MMSA) into acetyl-CoA and propanoyl-CoA, respectively. Is involved in a myo-inositol catabolic pathway. Bicarbonate, and not CO2, is the end-product of the enzymatic reaction. The sequence is that of Malonate-semialdehyde dehydrogenase 2 from Oceanobacillus iheyensis (strain DSM 14371 / CIP 107618 / JCM 11309 / KCTC 3954 / HTE831).